The chain runs to 338 residues: uncharacterized protein (338 aa).

This is an uncharacterized protein from Schizosaccharomyces pombe (strain 972 / ATCC 24843) (Fission yeast).